The sequence spans 245 residues: tRNA (guanine-N(7)-)-methyltransferase (245 aa).

S-adenosyl-L-methionine-binding residues include Glu-71, Glu-96, Asp-123, and Asp-146. Residue Asp-146 is part of the active site. Lys-150 contacts substrate. The interval 152–157 is interaction with RNA; the sequence is KHNKRR. Residues Asp-182 and 224 to 227 contribute to the substrate site; that span reads TKFE.

This sequence belongs to the class I-like SAM-binding methyltransferase superfamily. TrmB family.

The catalysed reaction is guanosine(46) in tRNA + S-adenosyl-L-methionine = N(7)-methylguanosine(46) in tRNA + S-adenosyl-L-homocysteine. Its pathway is tRNA modification; N(7)-methylguanine-tRNA biosynthesis. Catalyzes the formation of N(7)-methylguanine at position 46 (m7G46) in tRNA. The sequence is that of tRNA (guanine-N(7)-)-methyltransferase from Albidiferax ferrireducens (strain ATCC BAA-621 / DSM 15236 / T118) (Rhodoferax ferrireducens).